Consider the following 176-residue polypeptide: MYKTLCGTQLLLAIFVLFLNFSHATAKGTRGPMEIFKKNFMEKNKLNDVYDIFKFLYNKFSHDTYLSNIKNQSFTMNTWGFGEIEVVKTKCRKIDSDFYKCSFQWEFCNIKRTPGVTIYYITLPGSVRCRKLLSKLVNCPFEEQTEQLKREICYFQLYPDYIEQNIRSVRFNCYTK.

The signal sequence occupies residues Met-1–Ala-26. The propeptide occupies Lys-27–Arg-30. Asn-71 carries N-linked (GlcNAc...) asparagine glycosylation. 2 disulfides stabilise this stretch: Cys-129–Cys-139 and Cys-153–Cys-173.

Belongs to the cystatin family. In terms of tissue distribution, prostate.

The protein is Cystatin-related protein 2 (Crp2) of Rattus norvegicus (Rat).